A 142-amino-acid chain; its full sequence is Transcriptional regulator MraZ (142 aa).

SpoVT-AbrB domains lie at 5-51 and 77-120; these read ASSL…PRTE and AMDV…DKAT.

This sequence belongs to the MraZ family. As to quaternary structure, forms oligomers.

It is found in the cytoplasm. Its subcellular location is the nucleoid. The polypeptide is Transcriptional regulator MraZ (Delftia acidovorans (strain DSM 14801 / SPH-1)).